The sequence spans 423 residues: Histidine--tRNA ligase (423 aa).

It belongs to the class-II aminoacyl-tRNA synthetase family. In terms of assembly, homodimer.

The protein resides in the cytoplasm. The catalysed reaction is tRNA(His) + L-histidine + ATP = L-histidyl-tRNA(His) + AMP + diphosphate + H(+). The chain is Histidine--tRNA ligase from Desulfosudis oleivorans (strain DSM 6200 / JCM 39069 / Hxd3) (Desulfococcus oleovorans).